The chain runs to 236 residues: Probable glutathione S-transferase BZ2 (236 aa).

Residues 1 to 80 enclose the GST N-terminal domain; the sequence is MRVLGGEVSP…YIEDVARESG (80 aa). Glutathione contacts are provided by residues serine 9, lysine 37, isoleucine 51, and 64–65; that span reads ES. The GST C-terminal domain maps to 92-221; the sequence is DPYERAMHRF…LPDTEKVVQF (130 aa).

It belongs to the GST superfamily. HSP26 family.

The catalysed reaction is RX + glutathione = an S-substituted glutathione + a halide anion + H(+). It functions in the pathway pigment biosynthesis; anthocyanin biosynthesis. The chain is Probable glutathione S-transferase BZ2 (BZ2) from Zea mays (Maize).